We begin with the raw amino-acid sequence, 609 residues long: Grainyhead-like protein 1 homolog (609 aa).

Positions 1–91 (MTQDYDNKRP…EHDHADHEHS (91 aa)) are transcription activation. The disordered stretch occupies residues 183-207 (SDHFTSNNQPPNSQRRTPDSTFSET). Positions 185-206 (HFTSNNQPPNSQRRTPDSTFSE) are enriched in polar residues. One can recognise a Grh/CP2 DB domain in the interval 239–465 (AGNNFEYTLE…DLDTQPVLFI (227 aa)). Interaction with DNA regions lie at residues 371–380 (TDFSSQKGVK) and 418–421 (RKIR).

This sequence belongs to the grh/CP2 family. Grainyhead subfamily. Binds DNA as homodimer.

The protein localises to the nucleus. Transcription factor involved in epithelial development. Binds directly to the consensus DNA sequence 5'-AACCGGTT-3' and modulates expression of epidermal-specific genes, including XK81A1. Important regulator of DSG1 in the context of epidermal differentiation. Regulates the maintenance of skin barrier. No genetic interaction with GRHL3, nor functional cooperativity due to diverse target gene selectivity during epithelia development. Functions downstream of BMP-signaling cascade modulating endogenous bmp4-responsive targets. The sequence is that of Grainyhead-like protein 1 homolog from Xenopus laevis (African clawed frog).